The chain runs to 230 residues: Orotidine 5'-phosphate decarboxylase (230 aa).

Substrate is bound by residues D11, K34, 61–70 (DLKLHDIPNT), T117, R179, Q188, G208, and R209. Residue K63 is the Proton donor of the active site.

Belongs to the OMP decarboxylase family. Type 1 subfamily. As to quaternary structure, homodimer.

It catalyses the reaction orotidine 5'-phosphate + H(+) = UMP + CO2. It participates in pyrimidine metabolism; UMP biosynthesis via de novo pathway; UMP from orotate: step 2/2. In terms of biological role, catalyzes the decarboxylation of orotidine 5'-monophosphate (OMP) to uridine 5'-monophosphate (UMP). This chain is Orotidine 5'-phosphate decarboxylase, found in Streptococcus equi subsp. zooepidemicus (strain MGCS10565).